The following is a 269-amino-acid chain: Formamidopyrimidine-DNA glycosylase (269 aa).

The Schiff-base intermediate with DNA role is filled by Pro2. Glu3 serves as the catalytic Proton donor. Lys57 (proton donor; for beta-elimination activity) is an active-site residue. DNA-binding residues include His90, Arg109, and Lys150. Residues 235-269 (QVYGRKGEPCRVCGTPIVATKHAQRATFYCRQCQK) form an FPG-type zinc finger. Arg259 acts as the Proton donor; for delta-elimination activity in catalysis.

Belongs to the FPG family. Monomer. Zn(2+) serves as cofactor.

It catalyses the reaction Hydrolysis of DNA containing ring-opened 7-methylguanine residues, releasing 2,6-diamino-4-hydroxy-5-(N-methyl)formamidopyrimidine.. The catalysed reaction is 2'-deoxyribonucleotide-(2'-deoxyribose 5'-phosphate)-2'-deoxyribonucleotide-DNA = a 3'-end 2'-deoxyribonucleotide-(2,3-dehydro-2,3-deoxyribose 5'-phosphate)-DNA + a 5'-end 5'-phospho-2'-deoxyribonucleoside-DNA + H(+). Its function is as follows. Involved in base excision repair of DNA damaged by oxidation or by mutagenic agents. Acts as a DNA glycosylase that recognizes and removes damaged bases. Has a preference for oxidized purines, such as 7,8-dihydro-8-oxoguanine (8-oxoG). Has AP (apurinic/apyrimidinic) lyase activity and introduces nicks in the DNA strand. Cleaves the DNA backbone by beta-delta elimination to generate a single-strand break at the site of the removed base with both 3'- and 5'-phosphates. The sequence is that of Formamidopyrimidine-DNA glycosylase from Escherichia coli O157:H7.